Consider the following 197-residue polypeptide: ATP-dependent Clp protease proteolytic subunit 3 (197 aa).

Serine 96 functions as the Nucleophile in the catalytic mechanism. Residue histidine 121 is part of the active site.

It belongs to the peptidase S14 family. Fourteen ClpP subunits assemble into 2 heptameric rings which stack back to back to give a disk-like structure with a central cavity, resembling the structure of eukaryotic proteasomes.

Its subcellular location is the cytoplasm. It catalyses the reaction Hydrolysis of proteins to small peptides in the presence of ATP and magnesium. alpha-casein is the usual test substrate. In the absence of ATP, only oligopeptides shorter than five residues are hydrolyzed (such as succinyl-Leu-Tyr-|-NHMec, and Leu-Tyr-Leu-|-Tyr-Trp, in which cleavage of the -Tyr-|-Leu- and -Tyr-|-Trp bonds also occurs).. Functionally, cleaves peptides in various proteins in a process that requires ATP hydrolysis. Has a chymotrypsin-like activity. Plays a major role in the degradation of misfolded proteins. The polypeptide is ATP-dependent Clp protease proteolytic subunit 3 (Prochlorococcus marinus (strain MIT 9313)).